The following is a 396-amino-acid chain: Glutamyl-tRNA reductase (396 aa).

Substrate is bound by residues 45–48 (TCNR), serine 101, 106–108 (EDQ), and glutamine 112. Cysteine 46 functions as the Nucleophile in the catalytic mechanism. 177-182 (GFGDVG) contributes to the NADP(+) binding site.

The protein belongs to the glutamyl-tRNA reductase family. Homodimer.

The catalysed reaction is (S)-4-amino-5-oxopentanoate + tRNA(Glu) + NADP(+) = L-glutamyl-tRNA(Glu) + NADPH + H(+). It participates in porphyrin-containing compound metabolism; protoporphyrin-IX biosynthesis; 5-aminolevulinate from L-glutamyl-tRNA(Glu): step 1/2. In terms of biological role, catalyzes the NADPH-dependent reduction of glutamyl-tRNA(Glu) to glutamate 1-semialdehyde (GSA). The chain is Glutamyl-tRNA reductase from Clostridium acetobutylicum (strain ATCC 824 / DSM 792 / JCM 1419 / IAM 19013 / LMG 5710 / NBRC 13948 / NRRL B-527 / VKM B-1787 / 2291 / W).